We begin with the raw amino-acid sequence, 195 residues long: Dephospho-CoA kinase (195 aa).

One can recognise a DPCK domain in the interval 3–195; it reads IIGLTGSIAM…LFVIKSLLKN (193 aa). Residue 11 to 16 participates in ATP binding; sequence AMGKST.

Belongs to the CoaE family.

The protein resides in the cytoplasm. It catalyses the reaction 3'-dephospho-CoA + ATP = ADP + CoA + H(+). It participates in cofactor biosynthesis; coenzyme A biosynthesis; CoA from (R)-pantothenate: step 5/5. Catalyzes the phosphorylation of the 3'-hydroxyl group of dephosphocoenzyme A to form coenzyme A. This is Dephospho-CoA kinase from Bartonella henselae (strain ATCC 49882 / DSM 28221 / CCUG 30454 / Houston 1) (Rochalimaea henselae).